We begin with the raw amino-acid sequence, 370 residues long: Cyclic dehypoxanthine futalosine synthase (370 aa).

The region spanning 50–295 is the Radical SAM core domain; the sequence is TTFVIGRNVN…QSSWVTMGPE (246 aa). The [4Fe-4S] cluster site is built by Cys-64, Cys-68, and Cys-71.

The protein belongs to the radical SAM superfamily. MqnC family. [4Fe-4S] cluster serves as cofactor.

The catalysed reaction is dehypoxanthine futalosine + S-adenosyl-L-methionine = cyclic dehypoxanthinylfutalosinate + 5'-deoxyadenosine + L-methionine + H(+). It participates in quinol/quinone metabolism; menaquinone biosynthesis. Its function is as follows. Radical SAM enzyme that catalyzes the cyclization of dehypoxanthine futalosine (DHFL) into cyclic dehypoxanthine futalosine (CDHFL), a step in the biosynthesis of menaquinone (MK, vitamin K2). The protein is Cyclic dehypoxanthine futalosine synthase of Halalkalibacterium halodurans (strain ATCC BAA-125 / DSM 18197 / FERM 7344 / JCM 9153 / C-125) (Bacillus halodurans).